Reading from the N-terminus, the 98-residue chain is DNA-directed RNA polymerase subunit omega (98 aa).

The protein belongs to the RNA polymerase subunit omega family. The RNAP catalytic core consists of 2 alpha, 1 beta, 1 beta' and 1 omega subunit. When a sigma factor is associated with the core the holoenzyme is formed, which can initiate transcription.

The enzyme catalyses RNA(n) + a ribonucleoside 5'-triphosphate = RNA(n+1) + diphosphate. In terms of biological role, promotes RNA polymerase assembly. Latches the N- and C-terminal regions of the beta' subunit thereby facilitating its interaction with the beta and alpha subunits. The polypeptide is DNA-directed RNA polymerase subunit omega (Xylella fastidiosa (strain M12)).